The chain runs to 754 residues: Ribonucleoside-diphosphate reductase subunit alpha (754 aa).

The 90-residue stretch at 4–93 (INVIKSSGVS…MFALRKHVYG (90 aa)) folds into the ATP-cone domain. Substrate-binding positions include T206, 221-222 (SC), G250, 435-439 (NLCCE), and 615-619 (PCESS). An intrachain disulfide couples C222 to C457. N435 functions as the Proton acceptor in the catalytic mechanism. Residue C437 is the Cysteine radical intermediate of the active site. The active-site Proton acceptor is the E439. The disordered stretch occupies residues 621 to 641 (QVSNSTNGYEPPRGPVSVKES).

Belongs to the ribonucleoside diphosphate reductase large chain family. As to quaternary structure, heterodimer of a large and a small subunit.

The enzyme catalyses a 2'-deoxyribonucleoside 5'-diphosphate + [thioredoxin]-disulfide + H2O = a ribonucleoside 5'-diphosphate + [thioredoxin]-dithiol. With respect to regulation, under complex allosteric control mediated by deoxynucleoside triphosphates and ATP binding. The type of nucleotide bound at the specificity site determines substrate preference. It seems probable that ATP makes the enzyme reduce CDP and UDP, dGTP favors ADP reduction and dTTP favors GDP reduction. In terms of biological role, provides the precursors necessary for DNA synthesis. Catalyzes the biosynthesis of deoxyribonucleotides from the corresponding ribonucleotides. In Escherichia coli (Bacteriophage T4), this protein is Ribonucleoside-diphosphate reductase subunit alpha (NRDA).